Reading from the N-terminus, the 1240-residue chain is Neurofascin (1240 aa).

Residues 1–24 (MARQQAPPWVHIALILFLLSLGGA) form the signal peptide. The Extracellular segment spans residues 25–1110 (IEIPMDPSIQ…NQADIATQGW (1086 aa)). Ig-like C2-type domains follow at residues 41-137 (PTIT…LQVS), 143-230 (PKEN…NPFT), 244-332 (PSFM…ISVR), 337-424 (PYWL…AFVS), 430-517 (PRML…VRLE), and 521-603 (PTRI…QDLA). 4 disulfides stabilise this stretch: cysteine 63-cysteine 118, cysteine 162-cysteine 213, cysteine 268-cysteine 316, and cysteine 358-cysteine 408. N-linked (GlcNAc...) asparagine glycosylation occurs at asparagine 305. N-linked (GlcNAc...) asparagine glycosylation is found at asparagine 409 and asparagine 446. Cystine bridges form between cysteine 452-cysteine 501 and cysteine 543-cysteine 592. Tyrosine 481 bears the Phosphotyrosine mark. The N-linked (GlcNAc...) asparagine glycan is linked to asparagine 483. The residue at position 485 (serine 485) is a Phosphoserine. Fibronectin type-III domains follow at residues 630-725 (RPRD…TSGA), 727-823 (PESN…SGED), 827-923 (APRR…PNEA), and 1007-1099 (APDE…TAYT). The disordered stretch occupies residues 710–740 (SSHPSLPSERYRTSGAPPESNPSDVKGEGTR). Asparagine 752, asparagine 778, asparagine 866, and asparagine 881 each carry an N-linked (GlcNAc...) asparagine glycan. Residues 902 to 942 (ARTQVGSGEAATEESPAPPNEATPTAAPPTLPPTTVGTTGL) are disordered. Residues 907–916 (GSGEAATEES) are compositionally biased toward low complexity. The segment covering 917–933 (PAPPNEATPTAAPPTLP) has biased composition (pro residues). Residues 1111–1131 (FIGLMCAIALLVLILLIVCFI) traverse the membrane as a helical segment. Residues 1132–1240 (KRSRGGKYPV…SPVNAIYSLA (109 aa)) lie on the Cytoplasmic side of the membrane. The interval 1141–1240 (VREKKDVPLG…SPVNAIYSLA (100 aa)) is disordered. The segment covering 1154–1165 (PKEEDGSFDYSD) has biased composition (acidic residues). 7 positions are modified to phosphoserine: serine 1160, serine 1174, serine 1187, serine 1190, serine 1226, serine 1227, and serine 1231. The span at 1171–1184 (LQGSQTSLDGTIKQ) shows a compositional bias: polar residues.

Belongs to the immunoglobulin superfamily. L1/neurofascin/NgCAM family. In terms of assembly, horseshoe-shaped homodimer. Probable constituent of a NFASC/NRCAM/ankyrin-G complex. Associates with the sodium channel beta-1 (SCN1B) and beta-3 (SCN3B) subunits. Interacts with GLDN/gliomedin. Interacts with MYOC.

Its subcellular location is the cell membrane. In terms of biological role, cell adhesion, ankyrin-binding protein which may be involved in neurite extension, axonal guidance, synaptogenesis, myelination and neuron-glial cell interactions. This is Neurofascin (Nfasc) from Mus musculus (Mouse).